The chain runs to 318 residues: 1-aminocyclopropane-1-carboxylate oxidase (318 aa).

The Fe2OG dioxygenase domain occupies 153 to 253 (PNFGTKVANY…RMSIASFYNP (101 aa)). Residues His-177, Asp-179, and His-234 each coordinate Fe cation.

Belongs to the iron/ascorbate-dependent oxidoreductase family. The cofactor is Fe cation.

The enzyme catalyses 1-aminocyclopropane-1-carboxylate + L-ascorbate + O2 = ethene + L-dehydroascorbate + hydrogen cyanide + CO2 + 2 H2O. Its pathway is alkene biosynthesis; ethylene biosynthesis via S-adenosyl-L-methionine; ethylene from S-adenosyl-L-methionine: step 2/2. In Diospyros kaki (Kaki persimmon), this protein is 1-aminocyclopropane-1-carboxylate oxidase (DK-ACO1).